Consider the following 210-residue polypeptide: Ribosomal RNA large subunit methyltransferase E (210 aa).

S-adenosyl-L-methionine contacts are provided by Gly60, Trp62, Asp80, Asp96, and Asp121. The active-site Proton acceptor is Lys161.

Belongs to the class I-like SAM-binding methyltransferase superfamily. RNA methyltransferase RlmE family.

It localises to the cytoplasm. It catalyses the reaction uridine(2552) in 23S rRNA + S-adenosyl-L-methionine = 2'-O-methyluridine(2552) in 23S rRNA + S-adenosyl-L-homocysteine + H(+). Functionally, specifically methylates the uridine in position 2552 of 23S rRNA at the 2'-O position of the ribose in the fully assembled 50S ribosomal subunit. The protein is Ribosomal RNA large subunit methyltransferase E of Vesicomyosocius okutanii subsp. Calyptogena okutanii (strain HA).